Here is an 839-residue protein sequence, read N- to C-terminus: Autophagy-related protein 9A (839 aa).

Alanine 2 is subject to N-acetylalanine. Residues 2–61 (AQFDTEYQRLEASYSDSPPGEEDLLVHVAEGSKSPWHHIENLDLFFSRVYNLHQKNGFTC) are Cytoplasmic-facing. The Tyrosine-based sorting signal signature appears at 8 to 11 (YQRL). Serine 14, serine 16, and serine 18 each carry phosphoserine. The chain crosses the membrane as a helical span at residues 62 to 84 (MLIGEMFELMQFLFVVAFTTFLV). Residues 85–128 (SCVDYDILFANKMVNHSLHPTEPVKVTLPDAFLPAQVCSARIQE) lie on the Lumenal side of the membrane. Residue asparagine 99 is glycosylated (N-linked (GlcNAc...) asparagine). Residues 129–154 (NGSLITILVIAGVFWIHRLIKFIYNI) traverse the membrane as a helical segment. Residues 155 to 290 (CCYWEIHSFY…ELAQRLSNRI (136 aa)) are Cytoplasmic-facing. Residues 291-301 (LWIGIANFLLC) lie within the membrane without spanning it. At 302–319 (PLILIWQILYAFFSYAEV) the chain is on the cytoplasmic side. An intramembrane segment occupies 320–328 (LKREPGALG). Residues 329-371 (ARCWSLYGRCYLRHFNELEHELQSRLNRGYKPASKYMNCFLSP) lie on the Cytoplasmic side of the membrane. The helical transmembrane segment at 372–397 (LLTLLAKNGAFFAGSILAVLIALTIY) threads the bilayer. Residues 398–406 (DEDVLAVEH) are Lumenal-facing. The helical transmembrane segment at 407-424 (VLTTVTLLGVTVTVCRSF) threads the bilayer. The Cytoplasmic segment spans residues 425-470 (IPDQHMVFCPEQLLRVILAHIHYMPDHWQGNAHRSQTRDEFAQLFQ). Residues 471–480 (YKAVFILEEL) lie within the membrane without spanning it. At 481 to 483 (LSP) the chain is on the cytoplasmic side. The stretch at 484-492 (IVTPLILIF) is an intramembrane region. Residues 493 to 839 (CLRPRALEII…DELPPQVHKV (347 aa)) lie on the Cytoplasmic side of the membrane. Serine 656 is subject to Phosphoserine. Disordered stretches follow at residues 657 to 686 (PLQP…SSGS) and 717 to 839 (HKQQ…VHKV). Positions 724 to 736 (EPERHVWHRRESD) are enriched in basic and acidic residues. Phosphoserine is present on residues serine 735, serine 738, serine 741, and serine 828. 2 stretches are compositionally biased toward acidic residues: residues 737 to 747 (ESGESAPEEGG) and 823 to 832 (VPEEGSEDEL).

This sequence belongs to the ATG9 family. Homotrimer; forms a homotrimer with a central pore that forms a path between the two membrane leaflets. Interacts (via cytoplasmic its C-terminus) with ATG2A. Interacts with SUPT20H. Interacts (via the tyrosine-based sorting signal motif) with AP4M1; promoting association with the AP-4 complex. Interacts with ARFIP1 and ARFIP2. Interacts with ATG4A; the interaction is direct and promotes ATG9A trafficking. Ufmylated in a DDRGK1 dependent manner.

Its subcellular location is the preautophagosomal structure membrane. It localises to the cytoplasmic vesicle. The protein resides in the autophagosome membrane. It is found in the golgi apparatus. The protein localises to the trans-Golgi network membrane. Its subcellular location is the late endosome membrane. It localises to the recycling endosome membrane. The protein resides in the endoplasmic reticulum membrane. It is found in the mitochondrion membrane. It catalyses the reaction a 1,2-diacyl-sn-glycero-3-phosphocholine(in) = a 1,2-diacyl-sn-glycero-3-phosphocholine(out). The catalysed reaction is a 1,2-diacyl-sn-glycero-3-phospho-L-serine(in) = a 1,2-diacyl-sn-glycero-3-phospho-L-serine(out). The enzyme catalyses a 1,2-diacyl-sn-glycero-3-phosphoethanolamine(in) = a 1,2-diacyl-sn-glycero-3-phosphoethanolamine(out). Its function is as follows. Phospholipid scramblase involved in autophagy by mediating autophagosomal membrane expansion. Cycles between the preautophagosomal structure/phagophore assembly site (PAS) and the cytoplasmic vesicle pool and supplies membrane for the growing autophagosome. Lipid scramblase activity plays a key role in preautophagosomal structure/phagophore assembly by distributing the phospholipids that arrive through ATG2 (ATG2A or ATG2B) from the cytoplasmic to the luminal leaflet of the bilayer, thereby driving autophagosomal membrane expansion. Also required to supply phosphatidylinositol 4-phosphate to the autophagosome initiation site by recruiting the phosphatidylinositol 4-kinase beta (PI4KB) in a process dependent on ARFIP2, but not ARFIP1. In addition to autophagy, also plays a role in necrotic cell death. The polypeptide is Autophagy-related protein 9A (Mus musculus (Mouse)).